The primary structure comprises 396 residues: S-adenosylmethionine synthase (396 aa).

Residue His-16 participates in ATP binding. A Mg(2+)-binding site is contributed by Asp-18. Glu-44 contacts K(+). The L-methionine site is built by Glu-57 and Gln-100. The tract at residues 100–110 is flexible loop; that stretch reads QSQDIARGVDN. ATP contacts are provided by residues 162–164, Asp-237, 243–244, Ala-260, and Lys-264; these read DGK and RK. Asp-237 is an L-methionine binding site. Lys-268 is a binding site for L-methionine.

Belongs to the AdoMet synthase family. Homotetramer; dimer of dimers. The cofactor is Mg(2+). K(+) serves as cofactor.

Its subcellular location is the cytoplasm. The enzyme catalyses L-methionine + ATP + H2O = S-adenosyl-L-methionine + phosphate + diphosphate. It participates in amino-acid biosynthesis; S-adenosyl-L-methionine biosynthesis; S-adenosyl-L-methionine from L-methionine: step 1/1. Functionally, catalyzes the formation of S-adenosylmethionine (AdoMet) from methionine and ATP. The overall synthetic reaction is composed of two sequential steps, AdoMet formation and the subsequent tripolyphosphate hydrolysis which occurs prior to release of AdoMet from the enzyme. The polypeptide is S-adenosylmethionine synthase (Myxococcus xanthus).